Reading from the N-terminus, the 101-residue chain is MGDILGAVYDLGHRPYLARRTVYEDRLILSTHGNICRAINLLTHDNRTTLVYHNNTKRIRFRGLLCALHGPYCGFRALCRVMLCSLPRLCDIPIRLVDDDD.

The chain is RNA-3 uncharacterized 11.6 kDa protein from Beet necrotic yellow vein mosaic virus (isolate Yugoslavia/G1) (BNYVV).